Reading from the N-terminus, the 253-residue chain is MLETTIRNKLAQKDILLMTHIVIGYPDLDTSFEVVRTMVEAGVDLMELQIPFSEPMADGPVILKANQDALATGITVDECFDFAEKVAAAYDIPFLFMTYYNILFKYGVEAFAERMAKCGLCGAIVPDLPPEEADDYLAAMNKHGMAPIFIYAPNTTEARMQRIAEHGKGFIYCMARKGVTGLQTDFSGQLGDHLDHCRASTQLPLALGFGVKDRADVEFIKGKADIAVVGSQAIRVLDEGGVPAVEAFIRSLR.

Active-site proton acceptor residues include E47 and D58.

This sequence belongs to the TrpA family. In terms of assembly, tetramer of two alpha and two beta chains.

It carries out the reaction (1S,2R)-1-C-(indol-3-yl)glycerol 3-phosphate + L-serine = D-glyceraldehyde 3-phosphate + L-tryptophan + H2O. The protein operates within amino-acid biosynthesis; L-tryptophan biosynthesis; L-tryptophan from chorismate: step 5/5. In terms of biological role, the alpha subunit is responsible for the aldol cleavage of indoleglycerol phosphate to indole and glyceraldehyde 3-phosphate. In Syntrophotalea carbinolica (strain DSM 2380 / NBRC 103641 / GraBd1) (Pelobacter carbinolicus), this protein is Tryptophan synthase alpha chain.